The sequence spans 70 residues: DNA-directed RNA polymerase subunit epsilon (70 aa).

It belongs to the RNA polymerase subunit epsilon family. RNAP is composed of a core of 2 alpha, a beta and a beta' subunit. The core is associated with a delta subunit, and at least one of epsilon or omega. When a sigma factor is associated with the core the holoenzyme is formed, which can initiate transcription.

The enzyme catalyses RNA(n) + a ribonucleoside 5'-triphosphate = RNA(n+1) + diphosphate. Functionally, a non-essential component of RNA polymerase (RNAP). This is DNA-directed RNA polymerase subunit epsilon from Bacillus cereus (strain Q1).